The sequence spans 809 residues: Ecotropic viral integration site 5 protein (809 aa).

Residues 1–483 (MVTTKMTAAF…EAESQCALKE (483 aa)) are interaction with alpha-tubulin, gamma-tubulin, BIRC5 and FBXO5. Disordered regions lie at residues 49 to 80 (VASP…KLSP) and 99 to 123 (DSKS…SSSA). The segment covering 51-78 (SPSASLHTTSSSTTLSTPTQSPSSPSKL) has biased composition (low complexity). A phosphoserine mark is found at Ser102 and Ser113. Low complexity predominate over residues 103–123 (LRSVNGSRRNSGSSLVSSSSA). Positions 128–693 (SHLEEDSWIL…LNRSDSNQYI (566 aa)) are dimerization. Residues 163-348 (GIPHHFRAIV…RIFDIFMSEG (186 aa)) form the Rab-GAP TBC domain. Residues 377-809 (QHFQKVIPHQ…PQRESYSTTV (433 aa)) form a targeting to the centrosomes region. Positions 406 to 717 (KKMKKLEKEY…RCLKGQRDFS (312 aa)) form a coiled coil. Residues 487–809 (KVLDIEKKNN…PQRESYSTTV (323 aa)) are interaction with AURKB and INCENP. Ser497, Ser689, Ser776, and Ser778 each carry phosphoserine. Residues 760-809 (HRKSGPMSLNPALADGSESEAEDGMLGPQESDPEAPQKQPPQRESYSTTV) are disordered. The span at 799–809 (PPQRESYSTTV) shows a compositional bias: polar residues.

As to quaternary structure, dimeric and monomeric. Interacts with alpha- and gamma-tubulin. Interacts with FBXO5. Interacts with the chromosome passenger complex (CPC) which is at least composed of AURKB/aurora-B, BIRC5/survivin, CDCA8/borealin and INCENP. In terms of processing, probably phosphorylated by PLK1; may be required for degradation during mitosis. Post-translationally, ubiquitinated. Degradation during prophase is ubiquitin-dependent. Widely expressed.

It localises to the nucleus. It is found in the cytoplasm. Its subcellular location is the cytoskeleton. The protein localises to the microtubule organizing center. The protein resides in the centrosome. It localises to the spindle. Functions as a regulator of cell cycle progression by stabilizing the FBXO5 protein and promoting cyclin-A accumulation during interphase. May play a role in cytokinesis. The protein is Ecotropic viral integration site 5 protein (Evi5) of Mus musculus (Mouse).